A 116-amino-acid chain; its full sequence is Large ribosomal subunit protein bL17 (116 aa).

The protein belongs to the bacterial ribosomal protein bL17 family. In terms of assembly, part of the 50S ribosomal subunit. Contacts protein L32.

This Prochlorococcus marinus (strain NATL2A) protein is Large ribosomal subunit protein bL17.